The chain runs to 42 residues: MSNTGTTGRIPLWLVATVAGLAVIALLGVFFYGSYSGLGSSL.

Residues 10-30 traverse the membrane as a helical segment; that stretch reads IPLWLVATVAGLAVIALLGVF.

It belongs to the PsbJ family. PSII is composed of 1 copy each of membrane proteins PsbA, PsbB, PsbC, PsbD, PsbE, PsbF, PsbH, PsbI, PsbJ, PsbK, PsbL, PsbM, PsbT, PsbX, PsbY, PsbZ, Psb30/Ycf12, at least 3 peripheral proteins of the oxygen-evolving complex and a large number of cofactors. It forms dimeric complexes.

The protein localises to the plastid. It is found in the chloroplast thylakoid membrane. Functionally, one of the components of the core complex of photosystem II (PSII). PSII is a light-driven water:plastoquinone oxidoreductase that uses light energy to abstract electrons from H(2)O, generating O(2) and a proton gradient subsequently used for ATP formation. It consists of a core antenna complex that captures photons, and an electron transfer chain that converts photonic excitation into a charge separation. In Chlorokybus atmophyticus (Soil alga), this protein is Photosystem II reaction center protein J.